Here is a 397-residue protein sequence, read N- to C-terminus: Serpin B10 (397 aa).

A Nuclear localization signal motif is present at residues Lys74 to Lys77.

Belongs to the serpin family. Ov-serpin subfamily. Expressed in many tissues, including brain, heart, kidney, liver, lung, prostate, skin, spleen and stomach.

The protein localises to the nucleus. Its subcellular location is the cytoplasm. Protease inhibitor that may play a role in the regulation of protease activities during hematopoiesis and apoptosis induced by TNF. May regulate protease activities in the cytoplasm and in the nucleus. Inhibits plasmin. The sequence is that of Serpin B10 (Serpinb10) from Rattus norvegicus (Rat).